We begin with the raw amino-acid sequence, 486 residues long: Uridine/cytidine kinase UKL1, chloroplastic (486 aa).

A chloroplast-targeting transit peptide spans 1-47 (MPEDSSSLDYAMEKASGPHFSGLRFDGLLSSSPPNSSVVSSLRSAVS). Residues 31-54 (SSPPNSSVVSSLRSAVSSSSPSSS) show a composition bias toward low complexity. A disordered region spans residues 31–67 (SSPPNSSVVSSLRSAVSSSSPSSSDPEAPKQPFIIGV). A uridine kinase region spans residues 59 to 264 (PKQPFIIGVS…ITQHIHTKLG (206 aa)). The tract at residues 274–486 (NVYVIQSTFQ…RYFGTDEEDQ (213 aa)) is uracil phosphoribosyltransferase. GTP is bound by residues lysine 298, arginine 307, and 341–344 (CKKL). Residues arginine 351 and arginine 376 each coordinate 5-phospho-alpha-D-ribose 1-diphosphate. Arginine 396 contributes to the GTP binding site. Residues aspartate 402, 407 to 410 (TGNS), and glutamate 473 contribute to the 5-phospho-alpha-D-ribose 1-diphosphate site. A uracil-binding site is contributed by 472–474 (GEF).

It in the N-terminal section; belongs to the uridine kinase family. This sequence in the C-terminal section; belongs to the UPRTase family. Expressed in roots, leaves and stems.

It is found in the plastid. It localises to the chloroplast. Its subcellular location is the cytoplasm. The catalysed reaction is cytidine + ATP = CMP + ADP + H(+). The enzyme catalyses uridine + ATP = UMP + ADP + H(+). It functions in the pathway pyrimidine metabolism; CTP biosynthesis via salvage pathway; CTP from cytidine: step 1/3. It participates in pyrimidine metabolism; UMP biosynthesis via salvage pathway; UMP from uridine: step 1/1. Functionally, involved in the pyrimidine salvage pathway. Phosphorylates uridine to uridine monophosphate (UMP). Phosphorylates cytidine to cytidine monophosphate (CMP). Does not possess uracil phosphoribosyltransferase (UPRTase) activity that catalyzes the conversion of uracil and 5-phospho-alpha-D-ribose 1-diphosphate (PRPP) to UMP and diphosphate. In Arabidopsis thaliana (Mouse-ear cress), this protein is Uridine/cytidine kinase UKL1, chloroplastic.